A 587-amino-acid polypeptide reads, in one-letter code: 2-succinyl-5-enolpyruvyl-6-hydroxy-3-cyclohexene-1-carboxylate synthase (587 aa).

Belongs to the TPP enzyme family. MenD subfamily. As to quaternary structure, homodimer. The cofactor is Mg(2+). Requires Mn(2+) as cofactor. Thiamine diphosphate serves as cofactor.

The enzyme catalyses isochorismate + 2-oxoglutarate + H(+) = 5-enolpyruvoyl-6-hydroxy-2-succinyl-cyclohex-3-ene-1-carboxylate + CO2. Its pathway is quinol/quinone metabolism; 1,4-dihydroxy-2-naphthoate biosynthesis; 1,4-dihydroxy-2-naphthoate from chorismate: step 2/7. It participates in quinol/quinone metabolism; menaquinone biosynthesis. Functionally, catalyzes the thiamine diphosphate-dependent decarboxylation of 2-oxoglutarate and the subsequent addition of the resulting succinic semialdehyde-thiamine pyrophosphate anion to isochorismate to yield 2-succinyl-5-enolpyruvyl-6-hydroxy-3-cyclohexene-1-carboxylate (SEPHCHC). The protein is 2-succinyl-5-enolpyruvyl-6-hydroxy-3-cyclohexene-1-carboxylate synthase of Chloroflexus aurantiacus (strain ATCC 29366 / DSM 635 / J-10-fl).